The following is a 388-amino-acid chain: Succinate--CoA ligase [ADP-forming] subunit beta (388 aa).

Residues 9-244 (KQLFKEFGLP…PSQDDAREAE (236 aa)) form the ATP-grasp domain. ATP is bound by residues Lys-46, 53 to 55 (GRG), Glu-99, Thr-102, and Glu-107. Mg(2+)-binding residues include Asn-199 and Asp-213. Residues Asn-264 and 321–323 (GIV) contribute to the substrate site.

It belongs to the succinate/malate CoA ligase beta subunit family. Heterotetramer of two alpha and two beta subunits. It depends on Mg(2+) as a cofactor.

It catalyses the reaction succinate + ATP + CoA = succinyl-CoA + ADP + phosphate. The enzyme catalyses GTP + succinate + CoA = succinyl-CoA + GDP + phosphate. It participates in carbohydrate metabolism; tricarboxylic acid cycle; succinate from succinyl-CoA (ligase route): step 1/1. In terms of biological role, succinyl-CoA synthetase functions in the citric acid cycle (TCA), coupling the hydrolysis of succinyl-CoA to the synthesis of either ATP or GTP and thus represents the only step of substrate-level phosphorylation in the TCA. The beta subunit provides nucleotide specificity of the enzyme and binds the substrate succinate, while the binding sites for coenzyme A and phosphate are found in the alpha subunit. The chain is Succinate--CoA ligase [ADP-forming] subunit beta from Idiomarina loihiensis (strain ATCC BAA-735 / DSM 15497 / L2-TR).